The chain runs to 55 residues: Photosystem I reaction center subunit IX (55 aa).

The helical transmembrane segment at 7 to 27 (YLSVAPVLSTLWFGSLAGLLI) threads the bilayer.

It belongs to the PsaJ family.

It is found in the plastid. The protein resides in the chloroplast thylakoid membrane. Its function is as follows. May help in the organization of the PsaE and PsaF subunits. This chain is Photosystem I reaction center subunit IX, found in Gossypium barbadense (Sea Island cotton).